A 665-amino-acid polypeptide reads, in one-letter code: tRNA 5-methylaminomethyl-2-thiouridine biosynthesis bifunctional protein MnmC (665 aa).

The tract at residues 1–243 (MSQTSLHHAR…KREMLAGERA (243 aa)) is tRNA (mnm(5)s(2)U34)-methyltransferase. An FAD-dependent cmnm(5)s(2)U34 oxidoreductase region spans residues 268-665 (IGGGIASAMT…RKLLKGKPLQ (398 aa)).

This sequence in the N-terminal section; belongs to the methyltransferase superfamily. tRNA (mnm(5)s(2)U34)-methyltransferase family. The protein in the C-terminal section; belongs to the DAO family. FAD serves as cofactor.

Its subcellular location is the cytoplasm. The catalysed reaction is 5-aminomethyl-2-thiouridine(34) in tRNA + S-adenosyl-L-methionine = 5-methylaminomethyl-2-thiouridine(34) in tRNA + S-adenosyl-L-homocysteine + H(+). Functionally, catalyzes the last two steps in the biosynthesis of 5-methylaminomethyl-2-thiouridine (mnm(5)s(2)U) at the wobble position (U34) in tRNA. Catalyzes the FAD-dependent demodification of cmnm(5)s(2)U34 to nm(5)s(2)U34, followed by the transfer of a methyl group from S-adenosyl-L-methionine to nm(5)s(2)U34, to form mnm(5)s(2)U34. The protein is tRNA 5-methylaminomethyl-2-thiouridine biosynthesis bifunctional protein MnmC of Aeromonas hydrophila subsp. hydrophila (strain ATCC 7966 / DSM 30187 / BCRC 13018 / CCUG 14551 / JCM 1027 / KCTC 2358 / NCIMB 9240 / NCTC 8049).